We begin with the raw amino-acid sequence, 93 residues long: YcgL domain-containing protein KPK_1976 (93 aa).

A YcgL domain is found at 1–85 (MFCVIYRSTK…PSENLLKKHL (85 aa)).

The chain is YcgL domain-containing protein KPK_1976 from Klebsiella pneumoniae (strain 342).